The chain runs to 318 residues: MNQDTQSANTQQEKKIAYNFNKLQKRLRRNVGNAIADFNMIEDGDKVMVCLSGGKDSYTLLDILLNLKLSAPIHFDIVAVNLDQKQPGFPEHTLPEYLESIGVEYKIVEENTYGIVKEKIPEGKTTCSLCSRLRRGILYRTATELGATKIALGHHRDDMLETLFLNMFYGGKLKSMPPKLISDDGKQIVIRPLAYCKEKDIEKYSQAKQFPIIPCNLCGSQPNLQRQVVKEMLQTWDRQYPGRIETMFSAMQNITLSHLCDPSLFDFKGLKLGQVLDGVEGDIAFDKAEIPNQPLIQDEDEQTTDYGENGMIQFKQVQ.

Positions Ser52–Ser57 match the PP-loop motif motif. [4Fe-4S] cluster contacts are provided by Cys127, Cys130, and Cys218.

This sequence belongs to the TtcA family. As to quaternary structure, homodimer. Mg(2+) is required as a cofactor. [4Fe-4S] cluster serves as cofactor.

It localises to the cytoplasm. It carries out the reaction cytidine(32) in tRNA + S-sulfanyl-L-cysteinyl-[cysteine desulfurase] + AH2 + ATP = 2-thiocytidine(32) in tRNA + L-cysteinyl-[cysteine desulfurase] + A + AMP + diphosphate + H(+). The protein operates within tRNA modification. Its function is as follows. Catalyzes the ATP-dependent 2-thiolation of cytidine in position 32 of tRNA, to form 2-thiocytidine (s(2)C32). The sulfur atoms are provided by the cysteine/cysteine desulfurase (IscS) system. The protein is tRNA-cytidine(32) 2-sulfurtransferase of Actinobacillus pleuropneumoniae serotype 7 (strain AP76).